The primary structure comprises 137 residues: Large ribosomal subunit protein uL16 (137 aa).

The protein belongs to the universal ribosomal protein uL16 family. In terms of assembly, part of the 50S ribosomal subunit.

In terms of biological role, binds 23S rRNA and is also seen to make contacts with the A and possibly P site tRNAs. The polypeptide is Large ribosomal subunit protein uL16 (Agrobacterium fabrum (strain C58 / ATCC 33970) (Agrobacterium tumefaciens (strain C58))).